A 418-amino-acid polypeptide reads, in one-letter code: D-amino acid dehydrogenase (418 aa).

3-17 (VLVLGAGVVGTTSAW) lines the FAD pocket.

Belongs to the DadA oxidoreductase family. FAD is required as a cofactor.

The catalysed reaction is a D-alpha-amino acid + A + H2O = a 2-oxocarboxylate + AH2 + NH4(+). It functions in the pathway amino-acid degradation; D-alanine degradation; NH(3) and pyruvate from D-alanine: step 1/1. Its function is as follows. Oxidative deamination of D-amino acids. This chain is D-amino acid dehydrogenase, found in Dechloromonas aromatica (strain RCB).